We begin with the raw amino-acid sequence, 491 residues long: Cobyric acid synthase (491 aa).

Residues R250–A437 form the GATase cobBQ-type domain. Residue C331 is the Nucleophile of the active site. The active site involves H429.

The protein belongs to the CobB/CobQ family. CobQ subfamily.

It participates in cofactor biosynthesis; adenosylcobalamin biosynthesis. In terms of biological role, catalyzes amidations at positions B, D, E, and G on adenosylcobyrinic A,C-diamide. NH(2) groups are provided by glutamine, and one molecule of ATP is hydrogenolyzed for each amidation. The chain is Cobyric acid synthase from Xanthomonas campestris pv. campestris (strain B100).